The sequence spans 122 residues: Large ribosomal subunit protein uL14c (122 aa).

It belongs to the universal ribosomal protein uL14 family. As to quaternary structure, part of the 50S ribosomal subunit.

The protein localises to the plastid. It localises to the chloroplast. Binds to 23S rRNA. The sequence is that of Large ribosomal subunit protein uL14c from Guizotia abyssinica (Niger).